Reading from the N-terminus, the 346-residue chain is MKKTAIAIAVALAGFATVAQAAPKDNTWYTGAKLGWSQYHDTGFINNNGPTHENQLGAGAFGGYQVNPYVGFEMGYDWLGRMPYKGSVENGAYKAQGVQLTAKLGYPITDDLDIYTRLGGMVWRADTKSNVYGKNHDTGVSPVFAGGVEYAITPEIATRLEYQWTNNIGDAHTIGTRPDNGMLSLGVSYRFGQGEAAPVVAPAPAPAPEVQTKHFTLKSDVLFNFNKATLKPEGQAALDQLYSQLSNLDPKDGSVVVLGYTDRIGSDAYNQGLSERRAQSVVDYLISKGIPADKISARGMGESNPVTGNTCDNVKQRAALIDCLAPDRRVEIEVKGIKDVVTQPQA.

The N-terminal stretch at 1–21 (MKKTAIAIAVALAGFATVAQA) is a signal peptide. The next 8 membrane-spanning stretches (beta stranded) occupy residues 27–37 (TWYTGAKLGWS), 55–66 (QLGAGAFGGYQV), 70–78 (VGFEMGYDW), 96–107 (QGVQLTAKLGYP), 112–120 (LDIYTRLGG), 142–151 (PVFAGGVEYA), 156–163 (IATRLEYQ), and 182–190 (MLSLGVSYR). Residues 197–208 (APVVAPAPAPAP) form a hinge-like region. Repeat copies occupy residues 201–202 (AP), 203–204 (AP), 205–206 (AP), and 207–208 (AP). Residues 201–208 (APAPAPAP) form a 4 X 2 AA tandem repeats of A-P region. The 129-residue stretch at 210–338 (VQTKHFTLKS…RVEIEVKGIK (129 aa)) folds into the OmpA-like domain. A disulfide bond links Cys-311 and Cys-323.

Belongs to the outer membrane OOP (TC 1.B.6) superfamily. OmpA family. In terms of assembly, monomer and homodimer.

The protein resides in the cell outer membrane. Functionally, with TolR probably plays a role in maintaining the position of the peptidoglycan cell wall in the periplasm. Acts as a porin with low permeability that allows slow penetration of small solutes; an internal gate slows down solute passage. Required for conjugation with F-type plasmids; probably serves as the mating receptor on recipient cells. This Escherichia coli O157:H7 protein is Outer membrane protein A.